The following is a 360-amino-acid chain: Phospho-N-acetylmuramoyl-pentapeptide-transferase (360 aa).

The next 10 helical transmembrane spans lie at 21-41 (YLTL…FIVG), 70-90 (GTPT…TLLW), 97-117 (YVWA…VDDY), 134-154 (YLWQ…TASS), 168-188 (VVLN…VGSS), 199-219 (GLAI…AYAS), 236-256 (AGEL…FLWF), 263-283 (VFMG…VAVL), 288-308 (IVLM…MLQV), and 338-358 (VIVR…ATLK).

The protein belongs to the glycosyltransferase 4 family. MraY subfamily. Mg(2+) serves as cofactor.

Its subcellular location is the cell inner membrane. It carries out the reaction UDP-N-acetyl-alpha-D-muramoyl-L-alanyl-gamma-D-glutamyl-meso-2,6-diaminopimeloyl-D-alanyl-D-alanine + di-trans,octa-cis-undecaprenyl phosphate = di-trans,octa-cis-undecaprenyl diphospho-N-acetyl-alpha-D-muramoyl-L-alanyl-D-glutamyl-meso-2,6-diaminopimeloyl-D-alanyl-D-alanine + UMP. It functions in the pathway cell wall biogenesis; peptidoglycan biosynthesis. Functionally, catalyzes the initial step of the lipid cycle reactions in the biosynthesis of the cell wall peptidoglycan: transfers peptidoglycan precursor phospho-MurNAc-pentapeptide from UDP-MurNAc-pentapeptide onto the lipid carrier undecaprenyl phosphate, yielding undecaprenyl-pyrophosphoryl-MurNAc-pentapeptide, known as lipid I. This is Phospho-N-acetylmuramoyl-pentapeptide-transferase from Methylococcus capsulatus (strain ATCC 33009 / NCIMB 11132 / Bath).